A 100-amino-acid polypeptide reads, in one-letter code: Urease subunit gamma (100 aa).

This sequence belongs to the urease gamma subunit family. In terms of assembly, heterotrimer of UreA (gamma), UreB (beta) and UreC (alpha) subunits. Three heterotrimers associate to form the active enzyme.

It is found in the cytoplasm. It catalyses the reaction urea + 2 H2O + H(+) = hydrogencarbonate + 2 NH4(+). Its pathway is nitrogen metabolism; urea degradation; CO(2) and NH(3) from urea (urease route): step 1/1. The sequence is that of Urease subunit gamma from Polaromonas naphthalenivorans (strain CJ2).